The primary structure comprises 167 residues: Large ribosomal subunit protein uL10 (167 aa).

This sequence belongs to the universal ribosomal protein uL10 family. As to quaternary structure, part of the ribosomal stalk of the 50S ribosomal subunit. The N-terminus interacts with L11 and the large rRNA to form the base of the stalk. The C-terminus forms an elongated spine to which L12 dimers bind in a sequential fashion forming a multimeric L10(L12)X complex.

Its function is as follows. Forms part of the ribosomal stalk, playing a central role in the interaction of the ribosome with GTP-bound translation factors. The polypeptide is Large ribosomal subunit protein uL10 (Cytophaga hutchinsonii (strain ATCC 33406 / DSM 1761 / CIP 103989 / NBRC 15051 / NCIMB 9469 / D465)).